Here is a 130-residue protein sequence, read N- to C-terminus: uncharacterized protein (130 aa).

This is an uncharacterized protein from Methanocaldococcus jannaschii (strain ATCC 43067 / DSM 2661 / JAL-1 / JCM 10045 / NBRC 100440) (Methanococcus jannaschii).